A 646-amino-acid chain; its full sequence is ATP-dependent zinc metalloprotease FtsH (646 aa).

Positions 1-27 (MTNNQTDRPRPPGPESRRFDNNDKNNR) are disordered. Topologically, residues 1–35 (MTNNQTDRPRPPGPESRRFDNNDKNNRNRWGPIPS) are cytoplasmic. The segment covering 7–26 (DRPRPPGPESRRFDNNDKNN) has biased composition (basic and acidic residues). A helical transmembrane segment spans residues 36-56 (WAWIVLIVALLLNWLVAPILF). At 57–144 (PEGKGAVSIP…QPESSTRSLL (88 aa)) the chain is on the extracellular side. The chain crosses the membrane as a helical span at residues 145–165 (LSILISFGPTILFFLLFLWLI). The Cytoplasmic segment spans residues 166-646 (SKAQSSQQGL…GLGEKQPEPA (481 aa)). 237–244 (GPPGTGKT) is a binding site for ATP. Residue histidine 459 coordinates Zn(2+). Glutamate 460 is an active-site residue. 2 residues coordinate Zn(2+): histidine 463 and aspartate 535.

In the central section; belongs to the AAA ATPase family. The protein in the C-terminal section; belongs to the peptidase M41 family. Homohexamer. Zn(2+) is required as a cofactor.

The protein localises to the cell membrane. Acts as a processive, ATP-dependent zinc metallopeptidase for both cytoplasmic and membrane proteins. Plays a role in the quality control of integral membrane proteins. The protein is ATP-dependent zinc metalloprotease FtsH of Thermobaculum terrenum (strain ATCC BAA-798 / CCMEE 7001 / YNP1).